A 99-amino-acid polypeptide reads, in one-letter code: Small ribosomal subunit protein bS20 (99 aa).

This sequence belongs to the bacterial ribosomal protein bS20 family.

In terms of biological role, binds directly to 16S ribosomal RNA. The chain is Small ribosomal subunit protein bS20 from Caldicellulosiruptor bescii (strain ATCC BAA-1888 / DSM 6725 / KCTC 15123 / Z-1320) (Anaerocellum thermophilum).